Consider the following 392-residue polypeptide: Chaperone protein DnaJ (392 aa).

In terms of domain architecture, J spans 2-67 (DYYSILGISK…QKRDSYDRFG (66 aa)). A CR-type zinc finger spans residues 148–226 (GVEKELVVSG…CRGQGRVKDK (79 aa)). Residues Cys-161, Cys-164, Cys-178, Cys-181, Cys-200, Cys-203, Cys-214, and Cys-217 each contribute to the Zn(2+) site. 4 CXXCXGXG motif repeats span residues 161-168 (CETCSGQG), 178-185 (CERCKGSG), 200-207 (CPECGGEG), and 214-221 (CSSCRGQG).

This sequence belongs to the DnaJ family. In terms of assembly, homodimer. Zn(2+) is required as a cofactor.

The protein resides in the cytoplasm. Its function is as follows. Participates actively in the response to hyperosmotic and heat shock by preventing the aggregation of stress-denatured proteins and by disaggregating proteins, also in an autonomous, DnaK-independent fashion. Unfolded proteins bind initially to DnaJ; upon interaction with the DnaJ-bound protein, DnaK hydrolyzes its bound ATP, resulting in the formation of a stable complex. GrpE releases ADP from DnaK; ATP binding to DnaK triggers the release of the substrate protein, thus completing the reaction cycle. Several rounds of ATP-dependent interactions between DnaJ, DnaK and GrpE are required for fully efficient folding. Also involved, together with DnaK and GrpE, in the DNA replication of plasmids through activation of initiation proteins. The chain is Chaperone protein DnaJ from Chlamydia pneumoniae (Chlamydophila pneumoniae).